Reading from the N-terminus, the 461-residue chain is tRNA modification GTPase MnmE (461 aa).

Residues Arg23, Glu88, and Arg127 each coordinate (6S)-5-formyl-5,6,7,8-tetrahydrofolate. Positions 223–382 (GLNTVIVGKP…VEEALVEIVY (160 aa)) constitute a TrmE-type G domain. Asn233 is a binding site for K(+). Residues 233 to 238 (NVGKSS), 252 to 258 (TEVPGTT), and 277 to 280 (DTAG) each bind GTP. Ser237 lines the Mg(2+) pocket. The K(+) site is built by Thr252, Val254, and Thr257. A Mg(2+)-binding site is contributed by Thr258. Residue Lys461 participates in (6S)-5-formyl-5,6,7,8-tetrahydrofolate binding.

Belongs to the TRAFAC class TrmE-Era-EngA-EngB-Septin-like GTPase superfamily. TrmE GTPase family. In terms of assembly, homodimer. Heterotetramer of two MnmE and two MnmG subunits. K(+) is required as a cofactor.

It localises to the cytoplasm. Exhibits a very high intrinsic GTPase hydrolysis rate. Involved in the addition of a carboxymethylaminomethyl (cmnm) group at the wobble position (U34) of certain tRNAs, forming tRNA-cmnm(5)s(2)U34. The protein is tRNA modification GTPase MnmE of Alkaliphilus metalliredigens (strain QYMF).